The following is a 208-amino-acid chain: Small ribosomal subunit protein uS4 (208 aa).

Residues R98–Q161 form the S4 RNA-binding domain.

The protein belongs to the universal ribosomal protein uS4 family. As to quaternary structure, part of the 30S ribosomal subunit. Contacts protein S5. The interaction surface between S4 and S5 is involved in control of translational fidelity.

Functionally, one of the primary rRNA binding proteins, it binds directly to 16S rRNA where it nucleates assembly of the body of the 30S subunit. With S5 and S12 plays an important role in translational accuracy. The sequence is that of Small ribosomal subunit protein uS4 from Oleidesulfovibrio alaskensis (strain ATCC BAA-1058 / DSM 17464 / G20) (Desulfovibrio alaskensis).